Reading from the N-terminus, the 95-residue chain is Large ribosomal subunit protein bL25 (95 aa).

This sequence belongs to the bacterial ribosomal protein bL25 family. Part of the 50S ribosomal subunit; part of the 5S rRNA/L5/L18/L25 subcomplex. Contacts the 5S rRNA. Binds to the 5S rRNA independently of L5 and L18.

This is one of the proteins that binds to the 5S RNA in the ribosome where it forms part of the central protuberance. The polypeptide is Large ribosomal subunit protein bL25 (Shewanella sediminis (strain HAW-EB3)).